The primary structure comprises 223 residues: Pre-hexon-linking protein VIII (223 aa).

Thr-64 is subject to Phosphothreonine; by host. Residues 112–153 (GALAPRDLYALTLRGRGIQLNEDLPLSASTLRPDGIFQLGGG) constitute a propeptide that is removed on maturation. Ser-170 bears the Phosphoserine; by host mark.

Belongs to the adenoviridae hexon-linking protein family. In terms of assembly, interacts with the peripentonal hexons as well as the hexons in the facets. Part of a complex composed of the core-capsid bridging protein, the endosome lysis protein VI and the hexon-linking protein VIII; these interactions bridge the virus core to the capsid. In terms of processing, cleaved by the viral protease during virion maturation. May cause the middle segment to be shed from the capsid.

It is found in the virion. The protein localises to the host nucleus. Its function is as follows. Structural component of the virion that acts as a cement protein on the capsid interior and which glue the peripentonal hexons and group-of-nine hexons together. The polypeptide is Pre-hexon-linking protein VIII (Porcine adenovirus A serotype 3 (PAdV-3)).